We begin with the raw amino-acid sequence, 724 residues long: Semaphorin-2A (724 aa).

The signal sequence occupies residues 1–25 (MSLLQLSPLLALLLLLCSSVSETAA). Residues 45–522 (QGNNNYGKHG…TDHRIKQIDL (478 aa)) form the Sema domain. N-linked (GlcNAc...) asparagine glycosylation is present at Asn-95. Cys-118 and Cys-129 form a disulfide bridge. 4 N-linked (GlcNAc...) asparagine glycosylation sites follow: Asn-163, Asn-190, Asn-229, and Asn-314. 2 disulfide bridges follow: Cys-291–Cys-399 and Cys-315–Cys-358. N-linked (GlcNAc...) asparagine glycosylation is present at Asn-401. 2 cysteine pairs are disulfide-bonded: Cys-525/Cys-541 and Cys-535/Cys-550. Residues 552–663 (PYELDLLQDV…LCSYNITVDA (112 aa)) enclose the Ig-like C2-type domain. N-linked (GlcNAc...) asparagine glycosylation is present at Asn-563. A disulfide bridge connects residues Cys-590 and Cys-647. N-linked (GlcNAc...) asparagine glycosylation is found at Asn-658, Asn-670, and Asn-708.

This sequence belongs to the semaphorin family. As to quaternary structure, interacts with PlexB. As to expression, transiently expressed by a single large muscle during motoneuron outgrowth and synapse formation.

The protein resides in the secreted. Functionally, ligand for transmembrane receptor PlexB. Plays a role in growth cone guidance. Required for both proper adult behavior and survival. Can function as a selective target-derived signal that inhibits the formation of specific synaptic terminal arbors. Function in neurons is essential for adult survival, motor neuron survival, and is important for climbing behavior and activity. During embryogenesis, plays an important role in correct salivary gland positioning. The polypeptide is Semaphorin-2A (Drosophila melanogaster (Fruit fly)).